The chain runs to 198 residues: RNA-free ribonuclease P (198 aa).

This sequence belongs to the HARP family.

The enzyme catalyses Endonucleolytic cleavage of RNA, removing 5'-extranucleotides from tRNA precursor.. Its function is as follows. RNA-free RNase P that catalyzes the removal of the 5'-leader sequence from pre-tRNA to produce the mature 5'-terminus. The chain is RNA-free ribonuclease P from Nitrosococcus oceani (strain ATCC 19707 / BCRC 17464 / JCM 30415 / NCIMB 11848 / C-107).